The primary structure comprises 452 residues: Class E vacuolar protein-sorting machinery protein HSE1 (452 aa).

At Ser-2 the chain carries N-acetylserine. Residues 15–145 (ATDPKLRSDN…KIKRKAPYLV (131 aa)) form the VHS domain. Disordered regions lie at residues 144–166 (LVQPNVPEKHNMSTQADNSDDEE) and 187–212 (QEKESAEVLPQQQQQHQQQNQAPAHK). Ser-162 is modified (phosphoserine). The 20-residue stretch at 162-181 (SDDEELQKALKMSLFEYEKQ) folds into the UIM domain. Positions 197–207 (QQQQQHQQQNQ) are enriched in low complexity. In terms of domain architecture, SH3 spans 217-276 (TVVRRVRALYDLTTNEPDELSFRKGDVITVLEQVYRDWWKGALRGNMGIFPLNYVTPIVE). The interval 389–452 (AGMTHANNTP…VSQPPPGYEQ (64 aa)) is disordered. Residues 393–433 (HANNTPVMPPQRQSYQSNEYSPYPSNLPIQHPTNSANNTPQ) are compositionally biased toward polar residues.

Belongs to the STAM family. As to quaternary structure, component of the ESCRT-0 complex composed of HSE1 and VPS27. Interacts with the ESCRT-I subunit VPS23, the UBP7 deubiquitinase and the E3 ligase RSP5. May form a complex composed of VPS27, HSE1 and DOA1. Interacts (via SH3 domain) with DOA1.

The protein resides in the endosome membrane. In terms of biological role, component of the ESCRT-0 complex which is the sorting receptor for ubiquitinated cargo proteins at the multivesicular body (MVB) and recruits ESCRT-I to the MVB outer membrane. This Saccharomyces cerevisiae (strain ATCC 204508 / S288c) (Baker's yeast) protein is Class E vacuolar protein-sorting machinery protein HSE1 (HSE1).